Consider the following 91-residue polypeptide: Small ribosomal subunit protein uS19 (91 aa).

It belongs to the universal ribosomal protein uS19 family.

Its function is as follows. Protein S19 forms a complex with S13 that binds strongly to the 16S ribosomal RNA. This Cupriavidus taiwanensis (strain DSM 17343 / BCRC 17206 / CCUG 44338 / CIP 107171 / LMG 19424 / R1) (Ralstonia taiwanensis (strain LMG 19424)) protein is Small ribosomal subunit protein uS19.